Reading from the N-terminus, the 330-residue chain is Zinc finger protein sdz-12 (330 aa).

C2H2-type zinc fingers lie at residues 27–48 (PQCQ…HMKH), 63–85 (FRCE…QITH), 91–113 (KKCS…LHNH), 120–144 (FDCP…LVNH), and 153–176 (APCG…HFDH). Residues 183-195 (SAPAPTSSARLSP) are compositionally biased toward low complexity. Residues 183-203 (SAPAPTSSARLSPITVSTSGS) are disordered. The segment at 271 to 293 (FECKHCTIKFHDATMSIMHNALH) adopts a C2H2-type 6 zinc-finger fold.

Belongs to the krueppel C2H2-type zinc-finger protein family. In terms of tissue distribution, expressed in the somatic gonad.

Functionally, together with ehn-3, may play a role in gonadogenesis. In Caenorhabditis elegans, this protein is Zinc finger protein sdz-12.